A 357-amino-acid polypeptide reads, in one-letter code: Alanine racemase (357 aa).

Catalysis depends on lysine 35, which acts as the Proton acceptor; specific for D-alanine. Lysine 35 carries the post-translational modification N6-(pyridoxal phosphate)lysine. Arginine 131 lines the substrate pocket. The active-site Proton acceptor; specific for L-alanine is the tyrosine 256. Position 304 (methionine 304) interacts with substrate.

This sequence belongs to the alanine racemase family. The cofactor is pyridoxal 5'-phosphate.

The catalysed reaction is L-alanine = D-alanine. It functions in the pathway amino-acid biosynthesis; D-alanine biosynthesis; D-alanine from L-alanine: step 1/1. Functionally, catalyzes the interconversion of L-alanine and D-alanine. May also act on other amino acids. In Legionella pneumophila (strain Corby), this protein is Alanine racemase (alr).